The sequence spans 492 residues: Catalase-1 (492 aa).

Active-site residues include H65 and N138. Y348 is a heme binding site.

This sequence belongs to the catalase family. Homotetramer and heterotetramer. At least six or seven isozymes are produced from a mixture of 3 gene products. Interacts with NCA1. Interacts with LSD1. The cofactor is heme.

The protein localises to the cytoplasm. It catalyses the reaction 2 H2O2 = O2 + 2 H2O. Functionally, occurs in almost all aerobically respiring organisms and serves to protect cells from the toxic effects of hydrogen peroxide. This is Catalase-1 (CAT1) from Arabidopsis thaliana (Mouse-ear cress).